Reading from the N-terminus, the 190-residue chain is Elongation factor P-like protein (190 aa).

It belongs to the elongation factor P family.

The polypeptide is Elongation factor P-like protein (Klebsiella pneumoniae (strain 342)).